Here is a 323-residue protein sequence, read N- to C-terminus: Aldo-keto reductase family 1 member C4 (323 aa).

NADP(+)-binding positions include 20–24 and Asp50; that span reads GFGTY. Tyr55 serves as the catalytic Proton donor. Substrate is bound at residue His117. NADP(+)-binding positions include 166 to 167, Gln190, 216 to 221, and 270 to 280; these read SN, HSALGT, and KSYNEQRIREN.

It belongs to the aldo/keto reductase family. In terms of assembly, monomer. The N-terminus is blocked. As to expression, liver specific.

It localises to the cytoplasm. It is found in the cytosol. The enzyme catalyses a 3alpha-hydroxysteroid + NADP(+) = a 3-oxosteroid + NADPH + H(+). It catalyses the reaction a 3alpha-hydroxysteroid + NAD(+) = a 3-oxosteroid + NADH + H(+). It carries out the reaction 5alpha-androstane-3alpha,17beta-diol + NADP(+) = 17beta-hydroxy-5alpha-androstan-3-one + NADPH + H(+). The catalysed reaction is 5alpha-androstane-3beta,17beta-diol + NADP(+) = 17beta-hydroxy-5alpha-androstan-3-one + NADPH + H(+). The enzyme catalyses 5alpha-androstane-3alpha,17beta-diol + NAD(+) = 17beta-hydroxy-5alpha-androstan-3-one + NADH + H(+). It catalyses the reaction 17beta-estradiol + NADP(+) = estrone + NADPH + H(+). It carries out the reaction 17beta-estradiol + NAD(+) = estrone + NADH + H(+). The catalysed reaction is (20S)-hydroxypregn-4-en-3-one + NADP(+) = progesterone + NADPH + H(+). The enzyme catalyses (20S)-hydroxypregn-4-en-3-one + NAD(+) = progesterone + NADH + H(+). It catalyses the reaction androsterone + NADP(+) = 5alpha-androstan-3,17-dione + NADPH + H(+). It carries out the reaction testosterone + NADP(+) = androst-4-ene-3,17-dione + NADPH + H(+). The catalysed reaction is testosterone + NAD(+) = androst-4-ene-3,17-dione + NADH + H(+). The enzyme catalyses 3alpha-hydroxy-5alpha-androstane 17-O-(beta-D-glucuronate) + NADP(+) = 5alpha-dihydrotestosterone 17-O-(beta-D-glucuronate) + NADPH + H(+). It catalyses the reaction (3beta,5alpha,17beta)-3-hydroxy-androstan-17-yl sulfate + NADP(+) = 5alpha-dihydrotestosterone sulfate + NADPH + H(+). It carries out the reaction 5alpha-androstane-3alpha,17beta-diol + NAD(+) = androsterone + NADH + H(+). The catalysed reaction is chlordecone alcohol + NADP(+) = chlordecone + NADPH + H(+). It functions in the pathway steroid metabolism. Inhibited by nonsteroidal the anti-inflammatory drugs (NSAID) flufenamic. The oxidation reaction is inhibited by low micromolar concentrations of NADPH. Cytosolic aldo-keto reductase that catalyzes the NADH and NADPH-dependent reduction of ketosteroids to hydroxysteroids. Liver specific enzyme that acts as an NAD(P)(H)-dependent 3-, 17- and 20-ketosteroid reductase on the steroid nucleus and side chain. Displays the ability to catalyze both oxidation and reduction in vitro, but most probably acts as a reductase in vivo since the oxidase activity measured in vitro is inhibited by physiological concentration of NADPH. Acts preferentially as a 3-alpha-hydroxysteroid dehydrogenase (HSD) with a subsidiary 3-beta-HSD activity. Catalyzes efficiently the transformation of the potent androgen 5-alpha-dihydrotestosterone (5alpha-DHT or 17beta-hydroxy-5alpha-androstan-3-one) into the less active form, 5-alpha-androstan-3-alpha,17-beta-diol (3-alpha-diol). Catalyzes the reduction of estrone into 17beta-estradiol but with low efficiency. Metabolizes a broad spectrum of natural and synthetic therapeutic steroid and plays an important role in metabolism of androgens, estrogens, progestereone and conjugated steroids. Catalyzes the biotransformation of the pesticide chlordecone (kepone) to its corresponding alcohol leading to increased biliary excretion of the pesticide and concomitant reduction of its neurotoxicity since bile is the major excretory route. This is Aldo-keto reductase family 1 member C4 (AKR1C4) from Homo sapiens (Human).